Here is an 86-residue protein sequence, read N- to C-terminus: RNA-binding protein Hfq (86 aa).

One can recognise a Sm domain in the interval 9-68 (DPYLNTLRKEKVPVSIYLVNGIKLQGSIESFDQFVVLLKNTVSQMVYKHAISTVVPARPV). Residues 66-86 (RPVRLPSPSDSEHGDSEPGNA) are disordered. Residues 75 to 86 (DSEHGDSEPGNA) are compositionally biased toward basic and acidic residues.

It belongs to the Hfq family. Homohexamer.

In terms of biological role, RNA chaperone that binds small regulatory RNA (sRNAs) and mRNAs to facilitate mRNA translational regulation in response to envelope stress, environmental stress and changes in metabolite concentrations. Also binds with high specificity to tRNAs. The chain is RNA-binding protein Hfq from Pseudomonas putida (strain W619).